Consider the following 466-residue polypeptide: Argininosuccinate lyase (466 aa).

Belongs to the lyase 1 family. Argininosuccinate lyase subfamily.

Its subcellular location is the cytoplasm. It catalyses the reaction 2-(N(omega)-L-arginino)succinate = fumarate + L-arginine. It participates in amino-acid biosynthesis; L-arginine biosynthesis; L-arginine from L-ornithine and carbamoyl phosphate: step 3/3. This chain is Argininosuccinate lyase, found in Bartonella bacilliformis (strain ATCC 35685 / KC583 / Herrer 020/F12,63).